A 338-amino-acid chain; its full sequence is 1-aminocyclopropane-1-carboxylate deaminase (338 aa).

Lys-51 carries the N6-(pyridoxal phosphate)lysine modification. The Nucleophile role is filled by Ser-78.

This sequence belongs to the ACC deaminase/D-cysteine desulfhydrase family. As to quaternary structure, homotrimer. Pyridoxal 5'-phosphate serves as cofactor.

It carries out the reaction 1-aminocyclopropane-1-carboxylate + H2O = 2-oxobutanoate + NH4(+). Its function is as follows. Catalyzes a cyclopropane ring-opening reaction, the irreversible conversion of 1-aminocyclopropane-1-carboxylate (ACC) to ammonia and alpha-ketobutyrate. Allows growth on ACC as a nitrogen source. This is 1-aminocyclopropane-1-carboxylate deaminase from Pseudomonas putida (Arthrobacter siderocapsulatus).